Reading from the N-terminus, the 538-residue chain is (R)-citramalate synthase (538 aa).

Positions 3-268 constitute a Pyruvate carboxyltransferase domain; that stretch reads IKVYDTTLRD…IPKENLKKLF (266 aa).

Belongs to the alpha-IPM synthase/homocitrate synthase family.

It catalyses the reaction pyruvate + acetyl-CoA + H2O = (3R)-citramalate + CoA + H(+). Its pathway is amino-acid biosynthesis; L-isoleucine biosynthesis; 2-oxobutanoate from pyruvate: step 1/3. Its function is as follows. Catalyzes the condensation of pyruvate and acetyl-coenzyme A to form (R)-citramalate. The sequence is that of (R)-citramalate synthase from Thermotoga maritima (strain ATCC 43589 / DSM 3109 / JCM 10099 / NBRC 100826 / MSB8).